The primary structure comprises 66 residues: Large ribosomal subunit protein bL32 (66 aa).

This sequence belongs to the bacterial ribosomal protein bL32 family.

The polypeptide is Large ribosomal subunit protein bL32 (Leptospira interrogans serogroup Icterohaemorrhagiae serovar copenhageni (strain Fiocruz L1-130)).